A 113-amino-acid chain; its full sequence is UPF0482 protein YnfB (113 aa).

A signal peptide spans 1–28; the sequence is MNILSGKLPFLLGAVFAGSVVLATSVQA.

It belongs to the UPF0482 family.

This is UPF0482 protein YnfB from Escherichia fergusonii (strain ATCC 35469 / DSM 13698 / CCUG 18766 / IAM 14443 / JCM 21226 / LMG 7866 / NBRC 102419 / NCTC 12128 / CDC 0568-73).